Consider the following 349-residue polypeptide: S-adenosylmethionine:tRNA ribosyltransferase-isomerase (349 aa).

This sequence belongs to the QueA family. Monomer.

It is found in the cytoplasm. The catalysed reaction is 7-aminomethyl-7-carbaguanosine(34) in tRNA + S-adenosyl-L-methionine = epoxyqueuosine(34) in tRNA + adenine + L-methionine + 2 H(+). Its pathway is tRNA modification; tRNA-queuosine biosynthesis. Transfers and isomerizes the ribose moiety from AdoMet to the 7-aminomethyl group of 7-deazaguanine (preQ1-tRNA) to give epoxyqueuosine (oQ-tRNA). This Azotobacter vinelandii (strain DJ / ATCC BAA-1303) protein is S-adenosylmethionine:tRNA ribosyltransferase-isomerase.